The following is a 706-amino-acid chain: SPX domain-containing membrane protein OsI_32082 (706 aa).

The SPX domain occupies 2-145; the sequence is VNFSNKLTKD…GYKFTDYYVR (144 aa). Transmembrane regions (helical) follow at residues 251–271, 281–301, 318–338, 340–359, 378–398, and 414–434; these read MSLV…YIVV, LGAA…AQVF, LLFS…AFDL, SLTI…ARAV, AAFV…AGLL, and LPGW…WISF. Positions 475-498 are disordered; that stretch reads SEQDEEDDNGDEEHNETLSSSTTT. Over residues 476–488 the composition is skewed to acidic residues; the sequence is EQDEEDDNGDEEH. The next 5 membrane-spanning stretches (helical) occupy residues 520–540, 554–574, 583–603, 611–631, and 678–698; these read LLIY…SSVV, VFLA…GTYI, ILVA…KLTV, VCSA…NLSL, and LLNA…AATL.

It belongs to the major facilitator superfamily.

It is found in the membrane. In Oryza sativa subsp. indica (Rice), this protein is SPX domain-containing membrane protein OsI_32082.